Here is a 166-residue protein sequence, read N- to C-terminus: Small ribosomal subunit protein uS5 (166 aa).

Residues 12 to 75 (YIEKLVQVNR…EAARRNMIQV (64 aa)) enclose the S5 DRBM domain.

This sequence belongs to the universal ribosomal protein uS5 family. In terms of assembly, part of the 30S ribosomal subunit. Contacts proteins S4 and S8.

Functionally, with S4 and S12 plays an important role in translational accuracy. Located at the back of the 30S subunit body where it stabilizes the conformation of the head with respect to the body. The protein is Small ribosomal subunit protein uS5 of Pseudomonas fluorescens (strain Pf0-1).